We begin with the raw amino-acid sequence, 138 residues long: Putative pre-16S rRNA nuclease (138 aa).

It belongs to the YqgF nuclease family.

The protein localises to the cytoplasm. Its function is as follows. Could be a nuclease involved in processing of the 5'-end of pre-16S rRNA. In Polaromonas sp. (strain JS666 / ATCC BAA-500), this protein is Putative pre-16S rRNA nuclease.